The sequence spans 334 residues: Aromatic O-demethylase, reductase subunit (334 aa).

The 2Fe-2S ferredoxin-type domain maps to 1 to 91 (MTFAVSVGGR…DTEVRSTADA (91 aa)). 4 residues coordinate [2Fe-2S] cluster: cysteine 35, cysteine 40, cysteine 43, and cysteine 75. The FAD-binding FR-type domain occupies 98–198 (LRDLTATVLE…TGPLGDFHLP (101 aa)). FAD is bound by residues 145 to 148 (RQYS), 162 to 164 (HVR), 170 to 172 (VAT), threonine 215, phenylalanine 330, and serine 334.

In terms of assembly, monomer. Forms a heterodimer with GcoA. FAD is required as a cofactor. It depends on [2Fe-2S] cluster as a cofactor.

The enzyme catalyses 2 oxidized [cytochrome P450] + NADH = 2 reduced [cytochrome P450] + NAD(+) + H(+). It participates in aromatic compound metabolism. Its function is as follows. Part of a two-component P450 system that efficiently O-demethylates diverse aromatic substrates such as guaiacol and a wide variety of lignin-derived monomers. Is likely involved in lignin degradation, allowing Amycolatopsis sp. ATCC 39116 to catabolize plant biomass. GcoB transfers electrons from NADH to the cytochrome P450 subunit GcoA. Highly prefers NADH over NADPH as the electron donor. This Amycolatopsis sp. (strain ATCC 39116 / 75iv2) protein is Aromatic O-demethylase, reductase subunit.